The chain runs to 254 residues: RING-H2 finger protein ATL28 (254 aa).

The helical transmembrane segment at 25–45 threads the bilayer; that stretch reads VVLTGVLLFVIFAGFFSLFLW. The RING-type; atypical zinc finger occupies 103 to 145; sequence CAICLSEFSDEDTVRLITVCRHPFHSNCIDLWFELHKTCPVCR.

Belongs to the RING-type zinc finger family. ATL subfamily.

It is found in the membrane. It catalyses the reaction S-ubiquitinyl-[E2 ubiquitin-conjugating enzyme]-L-cysteine + [acceptor protein]-L-lysine = [E2 ubiquitin-conjugating enzyme]-L-cysteine + N(6)-ubiquitinyl-[acceptor protein]-L-lysine.. Its pathway is protein modification; protein ubiquitination. This Arabidopsis thaliana (Mouse-ear cress) protein is RING-H2 finger protein ATL28 (ATL28).